The following is a 439-amino-acid chain: Glutamate--tRNA ligase 2 (439 aa).

The 'HIGH' region motif lies at 6–16; the sequence is PSPTGDMHIGN. Positions 232–236 match the 'KMSKS' region motif; it reads KMSKR. Residue K235 coordinates ATP.

It belongs to the class-I aminoacyl-tRNA synthetase family. Glutamate--tRNA ligase type 1 subfamily. Monomer.

The protein resides in the cytoplasm. It carries out the reaction tRNA(Glu) + L-glutamate + ATP = L-glutamyl-tRNA(Glu) + AMP + diphosphate. Its function is as follows. Catalyzes the attachment of glutamate to tRNA(Glu) in a two-step reaction: glutamate is first activated by ATP to form Glu-AMP and then transferred to the acceptor end of tRNA(Glu). The polypeptide is Glutamate--tRNA ligase 2 (Helicobacter pylori (strain Shi470)).